A 353-amino-acid polypeptide reads, in one-letter code: Protein RecA (353 aa).

75 to 82 (GPESSGKT) provides a ligand contact to ATP.

Belongs to the RecA family.

It localises to the cytoplasm. Its function is as follows. Can catalyze the hydrolysis of ATP in the presence of single-stranded DNA, the ATP-dependent uptake of single-stranded DNA by duplex DNA, and the ATP-dependent hybridization of homologous single-stranded DNAs. It interacts with LexA causing its activation and leading to its autocatalytic cleavage. This is Protein RecA from Cupriavidus necator (Alcaligenes eutrophus).